Reading from the N-terminus, the 210-residue chain is Interleukin-6 (210 aa).

An N-terminal signal peptide occupies residues 1–25 (MNSLSTSAFSPVAFSLGLLLVMATA). C72 and C78 are disulfide-bonded. A Phosphoserine modification is found at S81. A disulfide bond links C101 and C111.

It belongs to the IL-6 superfamily. In terms of assembly, component of a hexamer of two molecules each of IL6, IL6R and IL6ST; first binds to IL6R to associate with the signaling subunit IL6ST. Interacts with IL6R (via the N-terminal ectodomain); this interaction may be affected by IL6R-binding with SORL1, hence decreasing IL6 cis signaling. Interacts with SORL1 (via the N-terminal ectodomain); this interaction leads to IL6 internalization and lysosomal degradation. May form a trimeric complex with the soluble SORL1 ectodomain and soluble IL6R receptor; this interaction might stabilize circulating IL6, hence promoting IL6 trans signaling.

The protein resides in the secreted. In terms of biological role, cytokine with a wide variety of biological functions in immunity, tissue regeneration, and metabolism. Binds to IL6R, then the complex associates to the signaling subunit IL6ST/gp130 to trigger the intracellular IL6-signaling pathway. The interaction with the membrane-bound IL6R and IL6ST stimulates 'classic signaling', whereas the binding of IL6 and soluble IL6R to IL6ST stimulates 'trans-signaling'. Alternatively, 'cluster signaling' occurs when membrane-bound IL6:IL6R complexes on transmitter cells activate IL6ST receptors on neighboring receiver cells. IL6 is a potent inducer of the acute phase response. Rapid production of IL6 contributes to host defense during infection and tissue injury, but excessive IL6 synthesis is involved in disease pathology. In the innate immune response, is synthesized by myeloid cells, such as macrophages and dendritic cells, upon recognition of pathogens through toll-like receptors (TLRs) at the site of infection or tissue injury. In the adaptive immune response, is required for the differentiation of B cells into immunoglobulin-secreting cells. Plays a major role in the differentiation of CD4(+) T cell subsets. Essential factor for the development of T follicular helper (Tfh) cells that are required for the induction of germinal-center formation. Required to drive naive CD4(+) T cells to the Th17 lineage. Also required for proliferation of myeloma cells and the survival of plasmablast cells. Its function is as follows. Acts as an essential factor in bone homeostasis and on vessels directly or indirectly by induction of VEGF, resulting in increased angiogenesis activity and vascular permeability. Induces, through 'trans-signaling' and synergistically with IL1B and TNF, the production of VEGF. Involved in metabolic controls, is discharged into the bloodstream after muscle contraction increasing lipolysis and improving insulin resistance. 'Trans-signaling' in central nervous system also regulates energy and glucose homeostasis. Mediates, through GLP-1, crosstalk between insulin-sensitive tissues, intestinal L cells and pancreatic islets to adapt to changes in insulin demand. Also acts as a myokine. Plays a protective role during liver injury, being required for maintenance of tissue regeneration. Also has a pivotal role in iron metabolism by regulating HAMP/hepcidin expression upon inflammation or bacterial infection. Through activation of IL6ST-YAP-NOTCH pathway, induces inflammation-induced epithelial regeneration. The sequence is that of Interleukin-6 (IL6) from Mustela putorius furo (European domestic ferret).